Here is a 362-residue protein sequence, read N- to C-terminus: Caveolae-associated protein 4 (362 aa).

The disordered stretch occupies residues 1–24 (MEHNGSASNAGKIHQNRLSSVTED). Residues 100-120 (IKDVKARVEKQQVRVTKVETK) adopt a coiled-coil conformation. 3 positions are modified to phosphoserine: Ser152, Ser171, and Ser172. Positions 227–255 (PERRERLRQSGERLRQSGERLRQSGERFK) are enriched in basic and acidic residues. The interval 227–261 (PERRERLRQSGERLRQSGERLRQSGERFKKSISNA) is disordered. A Phosphotyrosine modification is found at Tyr324. Thr334 bears the Phosphothreonine mark. At Ser353 the chain carries Phosphoserine.

Belongs to the CAVIN family. In terms of assembly, component of the CAVIN complex composed of CAVIN1, CAVIN2, CAVIN3 and CAVIN4. Interacts with CAVIN1, CAV3, ADRA1A and ADRA1B. Interacts with CAVIN2; this augments the transactivation of NPPA. Interacts with MAPK1 and MAPK3. Expressed at much higher levels in cardiomyocytes than in non-cardiomyocytes.

It is found in the cytoplasm. The protein localises to the myofibril. The protein resides in the sarcomere. It localises to the cytosol. Its subcellular location is the cell membrane. It is found in the sarcolemma. The protein localises to the membrane. The protein resides in the caveola. Functionally, modulates the morphology of formed caveolae in cardiomyocytes, but is not required for caveolar formation. Facilitates the recruitment of MAPK1/3 to caveolae within cardiomyocytes and regulates alpha-1 adrenergic receptor-induced hypertrophic responses in cardiomyocytes through MAPK1/3 activation. Contributes to proper membrane localization and stabilization of caveolin-3 (CAV3) in cardiomyocytes. Induces RHOA activation and activates NPPA transcription and myofibrillar organization through the Rho/ROCK signaling pathway. This chain is Caveolae-associated protein 4, found in Rattus norvegicus (Rat).